A 132-amino-acid polypeptide reads, in one-letter code: Riboflavin kinase (132 aa).

10–15 (GLGEGR) serves as a coordination point for CDP. The Mg(2+) site is built by Thr-39 and Asn-41. Thr-95, Tyr-96, and Glu-103 together coordinate FMN. Position 108-111 (108-111 (MKLR)) interacts with CDP.

Monomer. Mg(2+) is required as a cofactor.

It catalyses the reaction riboflavin + CTP = CDP + FMN + H(+). It functions in the pathway cofactor biosynthesis; FMN biosynthesis; FMN from riboflavin (CTP route): step 1/1. Functionally, catalyzes the CTP-dependent phosphorylation of riboflavin (vitamin B2) to form flavin mononucleotide (FMN). Can also utilize UTP as the phosphate donor, although less efficiently, and it is unclear if ATP and GTP can also serve as substrates or not. The chain is Riboflavin kinase (ribK) from Methanocaldococcus jannaschii (strain ATCC 43067 / DSM 2661 / JAL-1 / JCM 10045 / NBRC 100440) (Methanococcus jannaschii).